The sequence spans 360 residues: METQLSNGPTCNNTANGPTTVNNNCSSPVDSGNTEDSKTNLIVNYLPQNMTQEELKSLFGSIGEIESCKLVRDKITGQSLGYGFVNYIDPKDAEKAINTLNGLRLQTKTIKVSYARPSSASIRDANLYVSGLPKTMTQKELEQLFSQYGRIITSRILVDQVTGISRGVGFIRFDKRIEAEEAIKGLNGQKPPGATEPITVKFANNPSQKTNQAILSQLYQSPNRRYPGPLAQQAQRFRLDNLLNMAYGVKSRFSPMTIDGMTSLAGINIPGHPGTGWCIFVYNLAPDADESILWQMFGPFGAVTNVKVIRDFNTNKCKGFGFVTMTNYDEAAMAIASLNGYRLGDRVLQVSFKTNKTHKA.

The interval 1–36 (METQLSNGPTCNNTANGPTTVNNNCSSPVDSGNTED) is disordered. RRM domains lie at 39–117 (TNLI…YARP) and 125–205 (ANLY…FANN). At S221 the chain carries Phosphoserine. Residues 277–355 (WCIFVYNLAP…RVLQVSFKTN (79 aa)) enclose the RRM 3 domain.

The protein belongs to the RRM elav family. Interacts with IGF2BP1. Interacts with MAP1B light chain LC1. In terms of tissue distribution, brain; neural-specific. Expressed in the hippocampus.

Functionally, RNA-binding protein that binds to the 3' untranslated region (3'UTR) of target mRNAs. Seems to recognize a GAAA motif. Can bind to its own 3'UTR, the FOS 3'UTR and the ID 3'UTR. This chain is ELAV-like protein 2 (Elavl2), found in Mus musculus (Mouse).